Consider the following 21-residue polypeptide: Outer membrane protein A (21 aa).

Residues 6 to 16 (TWYTGAKLGWS) form a beta stranded membrane-spanning segment.

This sequence belongs to the outer membrane OOP (TC 1.B.6) superfamily. OmpA family. As to quaternary structure, monomer and homodimer.

It localises to the cell outer membrane. Functionally, with TolR probably plays a role in maintaining the position of the peptidoglycan cell wall in the periplasm. Acts as a porin with low permeability that allows slow penetration of small solutes; an internal gate slows down solute passage. This is Outer membrane protein A from Actinobacillus lignieresii.